Consider the following 243-residue polypeptide: Small ribosomal subunit protein uS3 (243 aa).

One can recognise a KH type-2 domain in the interval leucine 39–histidine 107. A disordered region spans residues valine 212–alanine 243.

The protein belongs to the universal ribosomal protein uS3 family. In terms of assembly, part of the 30S ribosomal subunit. Forms a tight complex with proteins S10 and S14.

Functionally, binds the lower part of the 30S subunit head. Binds mRNA in the 70S ribosome, positioning it for translation. In Chloroflexus aurantiacus (strain ATCC 29364 / DSM 637 / Y-400-fl), this protein is Small ribosomal subunit protein uS3.